The chain runs to 294 residues: 4-hydroxy-tetrahydrodipicolinate synthase (294 aa).

Pyruvate is bound at residue threonine 47. Tyrosine 136 acts as the Proton donor/acceptor in catalysis. The active-site Schiff-base intermediate with substrate is lysine 164. Residue valine 206 coordinates pyruvate.

The protein belongs to the DapA family. In terms of assembly, homotetramer; dimer of dimers.

Its subcellular location is the cytoplasm. The enzyme catalyses L-aspartate 4-semialdehyde + pyruvate = (2S,4S)-4-hydroxy-2,3,4,5-tetrahydrodipicolinate + H2O + H(+). Its pathway is amino-acid biosynthesis; L-lysine biosynthesis via DAP pathway; (S)-tetrahydrodipicolinate from L-aspartate: step 3/4. In terms of biological role, catalyzes the condensation of (S)-aspartate-beta-semialdehyde [(S)-ASA] and pyruvate to 4-hydroxy-tetrahydrodipicolinate (HTPA). This Acaryochloris marina (strain MBIC 11017) protein is 4-hydroxy-tetrahydrodipicolinate synthase.